Consider the following 346-residue polypeptide: NADH-ubiquinone oxidoreductase chain 2 (346 aa).

Helical transmembrane passes span 3-23, 25-45, 59-79, 96-116, 122-142, 149-169, 178-198, 200-220, 242-262, 274-294, and 322-342; these read PLIF…VMMS, HWLM…PILM, YFLT…INLM, IIMT…FWVP, ISLT…MSIL, INLN…GWGG, IMAY…VYNP, LTML…MLFI, TLIL…GFMP, SSII…YFYM, and ITLL…TPML.

The protein belongs to the complex I subunit 2 family. As to quaternary structure, core subunit of respiratory chain NADH dehydrogenase (Complex I) which is composed of 45 different subunits. Interacts with TMEM242.

The protein localises to the mitochondrion inner membrane. The enzyme catalyses a ubiquinone + NADH + 5 H(+)(in) = a ubiquinol + NAD(+) + 4 H(+)(out). Functionally, core subunit of the mitochondrial membrane respiratory chain NADH dehydrogenase (Complex I) which catalyzes electron transfer from NADH through the respiratory chain, using ubiquinone as an electron acceptor. Essential for the catalytic activity and assembly of complex I. This Equus caballus (Horse) protein is NADH-ubiquinone oxidoreductase chain 2.